The primary structure comprises 294 residues: 4-hydroxy-tetrahydrodipicolinate synthase (294 aa).

Threonine 45 contacts pyruvate. Tyrosine 133 functions as the Proton donor/acceptor in the catalytic mechanism. The Schiff-base intermediate with substrate role is filled by lysine 162. Residue isoleucine 204 coordinates pyruvate.

The protein belongs to the DapA family. As to quaternary structure, homotetramer; dimer of dimers.

The protein localises to the cytoplasm. The catalysed reaction is L-aspartate 4-semialdehyde + pyruvate = (2S,4S)-4-hydroxy-2,3,4,5-tetrahydrodipicolinate + H2O + H(+). The protein operates within amino-acid biosynthesis; L-lysine biosynthesis via DAP pathway; (S)-tetrahydrodipicolinate from L-aspartate: step 3/4. In terms of biological role, catalyzes the condensation of (S)-aspartate-beta-semialdehyde [(S)-ASA] and pyruvate to 4-hydroxy-tetrahydrodipicolinate (HTPA). The protein is 4-hydroxy-tetrahydrodipicolinate synthase of Bartonella tribocorum (strain CIP 105476 / IBS 506).